The sequence spans 292 residues: tRNA pseudouridine synthase B (292 aa).

Catalysis depends on Asp40, which acts as the Nucleophile.

Belongs to the pseudouridine synthase TruB family. Type 1 subfamily.

The catalysed reaction is uridine(55) in tRNA = pseudouridine(55) in tRNA. Its function is as follows. Responsible for synthesis of pseudouridine from uracil-55 in the psi GC loop of transfer RNAs. In Mycoplasma mycoides subsp. mycoides SC (strain CCUG 32753 / NCTC 10114 / PG1), this protein is tRNA pseudouridine synthase B.